The following is a 468-amino-acid chain: UDP-N-acetylmuramate--L-alanine ligase (468 aa).

112–118 (GTHGKTT) contacts ATP.

Belongs to the MurCDEF family.

The protein resides in the cytoplasm. The enzyme catalyses UDP-N-acetyl-alpha-D-muramate + L-alanine + ATP = UDP-N-acetyl-alpha-D-muramoyl-L-alanine + ADP + phosphate + H(+). Its pathway is cell wall biogenesis; peptidoglycan biosynthesis. Functionally, cell wall formation. In Bordetella pertussis (strain Tohama I / ATCC BAA-589 / NCTC 13251), this protein is UDP-N-acetylmuramate--L-alanine ligase.